Consider the following 216-residue polypeptide: Thymidine kinase (216 aa).

Residues 9-16 (GTMDCGKS) and 86-89 (DEAQ) contribute to the ATP site. Catalysis depends on E87, which acts as the Proton acceptor.

This sequence belongs to the thymidine kinase family. In terms of assembly, homotetramer.

Its subcellular location is the cytoplasm. The enzyme catalyses thymidine + ATP = dTMP + ADP + H(+). The sequence is that of Thymidine kinase from Streptomyces avermitilis (strain ATCC 31267 / DSM 46492 / JCM 5070 / NBRC 14893 / NCIMB 12804 / NRRL 8165 / MA-4680).